We begin with the raw amino-acid sequence, 4036 residues long: MSQQRYPEPIAVIGSACRFPGASSSPSKLWSLLQEPRDVLKKFDPDRLNLKRFHHTNGDTHGATDVNNKSYLLEENTRLFDASFFGISPLEAAGMDPQQRLLLETVYESFEAAGVTLDQLKGSLTSVHVGVMTNDYSFIQLRDPETLSKYNATGTANSIMSNRISYVFDLKGPSETIDTACSSSLVALHHAAQGLLSGDCETAVVAGVNLIFDPSPYITESKLHMLSPDSQSRMWDKSANGYARGEGAAALLLKPLSRALRDGDHIEGIVRGTGVNSDGQSSGITMPFAPAQSALIRQTYLRAGLDPIKDRPQYFECHGTGTPAGDPVEARAISESLLDGETSSDNPLYVGSVKTVIGHLEGCAGLAGVIRAILALKHRTIPPNLHFKELNPAIAQYYGPLQITTKALPWPEVPAGTPARASVNSFGFGGTNAHAIIESYDNGSASSSIQAQDEQPEESSEGGLGPLIFSAASGSSLLRTVQAYLEHLREHPSVDLQDLSWLLQTRRTTHRVRTHFSGASRDTVLENMATFVTTHEKASSATIGYQPQLVNPSEAPGVLGIFTGQGAQWPAMGRELIQKSPLFRKTIEECEAILNALPEGDVPEWSLMQELTADASSSRLSEAMISQPLCTAVQLGLVNLLTAAGISFDAVVGHSSGEIAATYASGIITTKGAMQIAYYRGFHAKLATGPDGERGGMLAAGLSFEKATQFCSRPEFQGRIQVAASNAPQSVTLSGDINAIKEAKEQLDADNIFARQLKVDTAYHSHHMQPCAGPYLQSLLACDIELQAPKPGSCVWNSSVRGDAELLKRDLSSLKGTYWVANMVQTVLFSQAIESSIWHGGPFDLAIEVGPHPALKGPVEQTLKAAYGSVPMYTGALKRNGSDVEAFSAALGVTWAQLGPSFVDFSSFREAFYESQAPAPKVIKDLPTYSWDHEKDYWRESRISRRYRTGKDVGHELLGRRTPDDNDHELRWRNVLKLSEMPWVRGHEVLDEVLLPGAAYVSIAVEAGKHLATSTGKSVRLIDVENVDILRPVVVPDNQEGVETLFTAHILSSSPSEGVLRARFSYYICNDQSSGSMVHTCSGDLVVHLGADSESGDLLPPRDAVPPNLVNIDGERVYKMFEGIDLKYSGVFRSIADSKRCLNYATATGVWPEGSLSNDYGVHPAMLDVAFQTLFIARAHPASRQITSALLPSHIDRVRVSPSVQILQPEGGGDIKAAFESWVVGQTATSLTGDLNVYDAETGKTFLQVEGLATNMVGEQDASHDQPIFSKTVWGRYDSVGLADPVRDAVKDAEATRLAEDIERVALFYIKRIVNQIGADERAGFQWYHQRMFGAFEKHLATIKNDEHPVLPSNWLADEPSVLEDISNAHPDSIDLQLLHAVGENLADVVRGDTQLLEVMQEDDMLDRFYMDNCASAPINQSIADVLQQITFKFPRCNILEIGAGTGGTTWSVLNSINNAYDSYTYTDISSGFFPNAAEKFSDFSNKMAFKILDVEKDPTTQGFVEESYDVIIAANVLHATRSLETTLRNVRSLLKPGGFLVLMEVTGMQSVRVTFILGGLPGWWLGADDGRPLGPGVSVVDWDVLFDKTGFSGADTVMHDLEDDTKHCNSLIVTQAVDDAFLRMREPLSFMAELPPLTEPLLVIGGKKLTTTKMMSEIQKLLPRSWKRHVQTVGSIDEIDTAKLIPRMDVICLQEADEPLFATPMTAKRIALLKSLLMSARNMLWVTGAGKSHTPRTSIFLGIARIVPSELPQLNLQMLGLESGASHSVAARNCVEAFLRLRATEEGNGSHMLWSQEPEMEILADGQTMVPRVMPNKPLNELYNASRRAVTKTIDATDVPVRAVAGPGKMTLQAAELQDASAQRARVQVKYALHIPSVNGKQVYLVCGHRQGSESATPVMAISESNGTIVEVDLERLITIDEDGCTPGVLAATANHLLVRAIATLASGARKVLLYQAEESLAAMVATEIAAQGGEAHFASSSSDAPDSWIKIHVNSSKRALSRVVPRDVQLYVDCSGYSQSAVSSVSSASDTLRACVPADCVAQQLGGGLLQEAFQRMDAGGSTLFKDSYAKAKSSFSENQEQILDCDLVKAADLAGADASSLTRKRYVTDWQEKESLTLTIQPLDLQGIFKPDKTYFMVGMAGGLGLSICQWMIRNGAKHLVITSRNPKIDDSLLEDARRANAKLHVMTMDVSKRDSVEKVVRLVQDTLPPIAGVCNAAMVLSDKLFIDMDVDQLNNTLAAKVYGTEHLDSVFDDMPLDFFVLLSSVATVIGNIGQANYHAANLFMTSLIAQRRARGLTGSVVHVGYISDVGYVTRQDRDRQLDQHFRNVRLMPLSETDVHHAFAEAIRGGKPGSVSGAHDIIMGLETFKEPLAPEKQPLWLANPRFAHFMPPTMLQTQQQHRGSGSADNVRKQVEEAETEDEAVAAVVKAFCSKLESILQLQEDSVNIQRAIIDLGIDSLVAVEIRTWFLKELGAEVAVVKILGGDTVIQVCTWATKKVMAINMKKKEAAQLDEAAAEKTATAATPAPAPDAAPAPAAPTKTASLTVPVENTSRTPESNSASVSDADDSESSGAVSKLGTSISGSSYAKMEFGDADARSESTGSSGMADSDDSSNRPETIREEIMSQAQSRIWFLSKHLEDPAAFNMTFHYRAQGPLSMARLRHALQVTTHHHECLRMRFYPRLGDGQPMQGVMGSSLYELEHIPDANDSDVKNELARFKTRVWDLENGKTFGVTVLSHSAEEHDIIYGYHHLVMDVVGWHVFVHDLDKAYKMQSLDKSAGSYFDYTSLQLEQEKAGVLEEDLKYWQAEFTTTPETLPLLPMAHTIVRPAEPGNESHHEYQELTSGQFTALKETCQRLRISPFHFHVAVMQVLLARYANTEDVCIGIVDANRNDARFAQTVGCFINMLPVRSHVSSHDSFANVARAASKKALAAFAHSAVPFDMILDKVKAPRSSASTPLFQAAVNYRTGSVWELPLGDCQMKLAGAKDADNPYDISLGITDMGSGCMIEIHCQASLYTSEGCRTILDSYVRLLESFAANPHLDITECEIYDKSQVGQALELGKGPEMEFGWPSTMSQRVLDMCSLHSDKSAVKDNTITLSYSNLASRVNAVADAILQAGCTAGSHVAVLCEPTVDATVAMLAVLHVGAVYVPLDTSLPTARHAAMVQSSRPALLLSHSATEGLVRDLGNELDSPIRQVRIDSISEEARQEVPCAAERGAPAVLLFTSGSTGTPKGIFLSQANFVNHLALKIHVLGFGQECVLQQSSLGFDMSLIQTFCALANGGLLVIVPSEMRRDPVELTGLLSRERISLTIATPSEYLAWLRYGEASLTENTAWRHACMGGEQVSRQLKSELRRVNLSGLRLTNCYGPTEITAAATFQAIDLEEKQDEDERAKFAVGKALPNYSVCILDASGQPQPAQHAGEICIGGAGVALGYLNLADETARKFIADVTSTADRRMYRTGDQGRLLSDGTLLCLGRLDGDTQVKLRGLRIELQEVESALLQAADGLLSTAVVSQRGDVLVAHATLSPGRDNASEEELTQVLGHLRLPQYFIPAAIIILAAMPTNSNGKLDRKAIGALSLPERGSNGTQEKMTIREGEVRLLWERVLPDTSTTGRLAPSSDFFLCGGNSLLMMKLQAAIRESIGVAISTRTLYQASTLREMARRIDEHQTAEGDDTEREIDWAAETTVPKALLRQIRELPAPVKSSKSDGIEVLMTGATSFLGGHLLQALLRSPVVRKVHCVAVLADDQHQLPRDEKIECYTGSLLSSTLGLNADERDRLEQTVDVIIHAGSSGHCLNTYDSLRTPNLLSTHFLSSLALPRSIPLLLLSSNRVVLLSGSTAPPPGSVAAFAPATDGLEGYTASKWASESFLENLVAHMQQVSRSPLTVAVHRPCVVVSEQAPNSDALNAILRYSVSMRCVPQLDNVEGYLDFGKVEKIVDEIADSALQLAQAGSQDQEIRFRHHSGGAKVPVREFRAHMEDIYGGSFDEVDVTEWMRRAADAGIDPLITAYLEGILDSGSPMVFPYLGEE.

In terms of domain architecture, Ketosynthase family 3 (KS3) spans 7–439; that stretch reads PEPIAVIGSA…GTNAHAIIES (433 aa). Residues Cys181, His318, and His359 each act as for beta-ketoacyl synthase activity in the active site. Residues 561–886 form a malonyl-CoA:ACP transacylase (MAT) domain region; sequence IFTGQGAQWP…LKRNGSDVEA (326 aa). An N-terminal hotdog fold region spans residues 955 to 1092; sequence HELLGRRTPD…GDLVVHLGAD (138 aa). Positions 955-1262 are dehydratase (DH) domain; sequence HELLGRRTPD…ATNMVGEQDA (308 aa). Positions 955-1263 constitute a PKS/mFAS DH domain; it reads HELLGRRTPD…TNMVGEQDAS (309 aa). The active-site Proton acceptor; for dehydratase activity is His987. Residues 1109-1263 are C-terminal hotdog fold; it reads LVNIDGERVY…TNMVGEQDAS (155 aa). Asp1168 serves as the catalytic Proton donor; for dehydratase activity. The tract at residues 1402 to 1601 is methyltransferase (MT) domain; sequence EDDMLDRFYM…FSGADTVMHD (200 aa). The tract at residues 2136-2277 is ketoreductase (KR) domain; the sequence is KTYFMVGMAG…SVATVIGNIG (142 aa). Residues 2425–2502 form the Carrier 1 domain; that stretch reads EAVAAVVKAF…QVCTWATKKV (78 aa). Position 2462 is an O-(pantetheine 4'-phosphoryl)serine (Ser2462). Disordered regions lie at residues 2520 to 2583 and 2597 to 2621; these read AEKT…KLGT and DADA…NRPE. Over residues 2530–2540 the composition is skewed to pro residues; that stretch reads APAPDAAPAPA. The tract at residues 2627–3054 is condensation (C) domain; that stretch reads IMSQAQSRIW…HLDITECEIY (428 aa). The segment at 3088 to 3485 is adenylation (A) (KR) domain; the sequence is SLHSDKSAVK…GTLLCLGRLD (398 aa). The segment at 3088-3485 is reductase (RED) domain; sequence SLHSDKSAVK…GTLLCLGRLD (398 aa). The Carrier 2 domain maps to 3596–3675; sequence EKMTIREGEV…EMARRIDEHQ (80 aa). Ser3635 is modified (O-(pantetheine 4'-phosphoryl)serine).

It in the C-terminal section; belongs to the NRP synthetase family.

The enzyme catalyses L-tyrosine + holo-[ACP] + 7 malonyl-CoA + acetyl-CoA + 8 AH2 + 2 S-adenosyl-L-methionine + ATP + 4 H(+) = N-[(4E,6E,10S,12Z,14E)-6,10-dimethyl-3-oxohexadeca-4,6,12,14-tetraenoyl]-L-tyrosyl-[ACP] + 8 A + AMP + 2 S-adenosyl-L-homocysteine + 7 CO2 + diphosphate + 8 CoA + 6 H2O. It functions in the pathway mycotoxin biosynthesis. In terms of biological role, hybrid PKS-NRPS synthetase; part of the gene cluster that mediates the biosynthesis of ilicicolin H, a 4-hydroxy-2-pyridonealkaloid that has potent and broad antifungal activities by inhibiting the mitochondrial respiration chain. IliA assembles the backbone of ilicicolin H. The PKS portion and trans-acting enoyl reductase iliB work together to construct an octaketide, and two methyl groups are introduced by the MT domain during the chain assembly. The nascent chain is then condensed with tyrosine, catalyzed by the C domain, and the resulting PKS-NRPS hybrid is offloaded by the RED domain to form an advanced tetramic acid intermediate. The biosynthesis of ilicicolin H starts with formation of the tetramic acid by the hybrid PKS-NRPS synthetase iliA with the partnering trans-enoyl reductase iliB since iliA lacks a designated enoylreductase (ER) domain. The cytochrome P450 monooxygenase iliC then catalyzes the ring expansion of the tetramate to the acyclic 2-pyridone. The pericyclase iliD further converts the acyclic 2-pyridone into 8-epi-ilicicolin H. 8-epi-ilicicolin H might then spontaneously convert to ilicicolin H, since ilicicolin H is produced in the absence of the epimerase iliE, in contrast to what was observed for the Talaromyces variabilis ilicolin H biosynthetic pathway. The polypeptide is Hybrid PKS-NRPS synthetase iliA (Neonectria sp. (strain DH2)).